Consider the following 307-residue polypeptide: Probable GTP 3',8-cyclase (307 aa).

A Radical SAM core domain is found at 5-231; that stretch reads RFGRPVTNLR…MHRRKKYFIP (227 aa). Arg14 provides a ligand contact to GTP. 3 residues coordinate [4Fe-4S] cluster: Cys21, Cys25, and Cys28. GTP is bound at residue Lys62. Gly66 serves as a coordination point for S-adenosyl-L-methionine. Thr91 is a GTP binding site. S-adenosyl-L-methionine is bound at residue Ser115. Residue Lys151 participates in GTP binding. Met190 provides a ligand contact to S-adenosyl-L-methionine. Positions 251 and 254 each coordinate [4Fe-4S] cluster. 256–258 serves as a coordination point for GTP; sequence RLR. A [4Fe-4S] cluster-binding site is contributed by Cys268.

The protein belongs to the radical SAM superfamily. MoaA family. [4Fe-4S] cluster serves as cofactor.

It carries out the reaction GTP + AH2 + S-adenosyl-L-methionine = (8S)-3',8-cyclo-7,8-dihydroguanosine 5'-triphosphate + 5'-deoxyadenosine + L-methionine + A + H(+). Its pathway is cofactor biosynthesis; molybdopterin biosynthesis. Functionally, catalyzes the cyclization of GTP to (8S)-3',8-cyclo-7,8-dihydroguanosine 5'-triphosphate. In Thermococcus kodakarensis (strain ATCC BAA-918 / JCM 12380 / KOD1) (Pyrococcus kodakaraensis (strain KOD1)), this protein is Probable GTP 3',8-cyclase.